Reading from the N-terminus, the 568-residue chain is Serine/threonine-protein kinase RIO1 (568 aa).

Disordered regions lie at residues 14 to 70 (GQFD…DDDW) and 83 to 109 (YVWN…STPA). Phosphoserine occurs at positions 21 and 22. The span at 24–38 (SENRDLKTVKEKDDI) shows a compositional bias: basic and acidic residues. Residues 51 to 70 (GEGEIEDEEEEGYDDDDDDW) are compositionally biased toward acidic residues. The span at 87–105 (GGSNPQANRQTSDSSSAKM) shows a compositional bias: polar residues. The region spanning 180–479 (TEINGCISTG…TGLKKDLSGV (300 aa)) is the Protein kinase domain. ATP contacts are provided by lysine 208, serine 278, and isoleucine 280. Aspartate 324 functions as the Proton acceptor in the catalytic mechanism. Mg(2+)-binding residues include asparagine 329 and aspartate 341. Aspartate 341 acts as the 4-aspartylphosphate intermediate in catalysis. Residues 490–568 (VEERTCSDSE…EKTAKTKKGK (79 aa)) form a disordered region. Over residues 497 to 513 (DSEDIGSSECSDTDSEE) the composition is skewed to acidic residues. Positions 514 to 543 (QGDHARPKKHTTDPDIDKKERKKMVKEAQR) are enriched in basic and acidic residues. Residues 544–568 (EKRKNKIPKHVKKRKEKTAKTKKGK) are compositionally biased toward basic residues.

The protein belongs to the protein kinase superfamily. RIO-type Ser/Thr kinase family. As to quaternary structure, associates with the precursor of the 40S ribosome subunit. Interacts (via its N-terminus) with PRMT5 (via its N-terminus). Interacts with WDR77. Found in a PRMT5 complex composed of PRMT5, WDR77 and RIOK1. Interacts (via its C-terminus) with NCL; this interaction targets NCL for PRTM5 methylation. Requires Mg(2+) as cofactor.

The protein resides in the cytoplasm. It is found in the cytosol. It catalyses the reaction L-seryl-[protein] + ATP = O-phospho-L-seryl-[protein] + ADP + H(+). The catalysed reaction is L-threonyl-[protein] + ATP = O-phospho-L-threonyl-[protein] + ADP + H(+). The enzyme catalyses ATP + H2O = ADP + phosphate + H(+). Involved in the final steps of cytoplasmic maturation of the 40S ribosomal subunit. Involved in processing of 18S-E pre-rRNA to the mature 18S rRNA. Required for the recycling of NOB1 and PNO1 from the late 40S precursor. The association with the very late 40S subunit intermediate may involve a translation-like checkpoint point cycle preceeding the binding to the 60S ribosomal subunit. Despite the protein kinase domain is proposed to act predominantly as an ATPase. The catalytic activity regulates its dynamic association with the 40S subunit. In addition to its role in ribosomal biogenesis acts as an adapter protein by recruiting NCL/nucleolin the to PRMT5 complex for its symmetrical methylation. This chain is Serine/threonine-protein kinase RIO1, found in Homo sapiens (Human).